The sequence spans 271 residues: Diaminopimelate epimerase (271 aa).

Substrate-binding residues include N13, Q46, and N66. C75 functions as the Proton donor in the catalytic mechanism. Substrate is bound by residues 76 to 77 (GN), N155, N188, and 206 to 207 (ER). Residue C215 is the Proton acceptor of the active site. 216-217 (GS) is a binding site for substrate.

This sequence belongs to the diaminopimelate epimerase family. Homodimer.

The protein resides in the cytoplasm. The enzyme catalyses (2S,6S)-2,6-diaminopimelate = meso-2,6-diaminopimelate. It participates in amino-acid biosynthesis; L-lysine biosynthesis via DAP pathway; DL-2,6-diaminopimelate from LL-2,6-diaminopimelate: step 1/1. Functionally, catalyzes the stereoinversion of LL-2,6-diaminopimelate (L,L-DAP) to meso-diaminopimelate (meso-DAP), a precursor of L-lysine and an essential component of the bacterial peptidoglycan. The chain is Diaminopimelate epimerase from Vesicomyosocius okutanii subsp. Calyptogena okutanii (strain HA).